A 703-amino-acid polypeptide reads, in one-letter code: Protein STRUBBELIG-RECEPTOR FAMILY 8 (703 aa).

The signal sequence occupies residues 1-27; the sequence is MAIGDRAMFTVLLLFIASISGFSVVRC. Over 28 to 291 the chain is Extracellular; the sequence is VTDPSDVQAL…GKGLSGGVVT (264 aa). LRR repeat units lie at residues 96 to 120, 122 to 142, 143 to 165, 166 to 190, 192 to 212, 213 to 233, and 234 to 256; these read LKSL…LPPN, TSLN…ISAM, GSLS…IFAD, HKSL…LSTV, TLSV…VLSG, LPLK…PKEL, and SSIQ…PQPE. Asparagine 120, asparagine 130, asparagine 149, and asparagine 178 each carry an N-linked (GlcNAc...) asparagine glycan. Asparagine 226 is a glycosylation site (N-linked (GlcNAc...) asparagine). A disordered region spans residues 247 to 284; that stretch reads DNVPASPQPERPGKKETPSGSKKPKIGSEEKSSDSGKG. The chain crosses the membrane as a helical span at residues 292-312; sequence GIVFGSLFVAGIIALVLYLCL. Residues 313–703 lie on the Cytoplasmic side of the membrane; that stretch reads HKKKRKVRGS…PEHEHVDISF (391 aa). In terms of domain architecture, Protein kinase spans 395-672; that stretch reads FSQENIIGEG…SEVVQQLVRL (278 aa). ATP-binding positions include 401–409 and lysine 423; that span reads IGEGSLGRV.

The protein belongs to the protein kinase superfamily. Ser/Thr protein kinase family. In terms of tissue distribution, expressed in seedlings, roots, stems, leaves, flowers and siliques.

The protein resides in the membrane. This Arabidopsis thaliana (Mouse-ear cress) protein is Protein STRUBBELIG-RECEPTOR FAMILY 8 (SRF8).